The chain runs to 119 residues: Protein TusC (119 aa).

The protein belongs to the DsrF/TusC family. In terms of assembly, heterohexamer, formed by a dimer of trimers. The hexameric TusBCD complex contains 2 copies each of TusB, TusC and TusD. The TusBCD complex interacts with TusE.

It localises to the cytoplasm. Part of a sulfur-relay system required for 2-thiolation of 5-methylaminomethyl-2-thiouridine (mnm(5)s(2)U) at tRNA wobble positions. The protein is Protein TusC of Photorhabdus laumondii subsp. laumondii (strain DSM 15139 / CIP 105565 / TT01) (Photorhabdus luminescens subsp. laumondii).